The primary structure comprises 447 residues: Putative branched-chain amino acid carrier protein SERP0977 (447 aa).

A run of 12 helical transmembrane segments spans residues 5-25 (TWIIGFTLFAMFFGAGNLIFP), 40-60 (ILAFALTGIGLPLLGVVVGAL), 74-94 (PRFSLIFLIIIYLTIGPLFAI), 114-134 (GNLALFIFTVIYFLIVLYLCL), 143-163 (IGSLLTPLLLITIVAMIIKGF), 193-213 (GYLTMDAIASIAFSMIVVNAI), 229-249 (IIAGLIAAIALVFIYISLGYI), 290-310 (LLGIIVSLACLTTACGLIVSV), 317-337 (IIPKIPYKVFVVFFILVSFIL), 350-370 (VPVLSVIYPVAITVILLILIA), 382-402 (IPLIIVAIESILSLITTQGWI), and 417-437 (LEWFPIAVVATLVGYMISYFV).

It belongs to the branched chain amino acid transporter family.

The protein localises to the cell membrane. Its function is as follows. Component of the transport system for branched-chain amino acids (leucine, isoleucine and valine), which is coupled to a proton motive force. This is Putative branched-chain amino acid carrier protein SERP0977 from Staphylococcus epidermidis (strain ATCC 35984 / DSM 28319 / BCRC 17069 / CCUG 31568 / BM 3577 / RP62A).